The following is a 381-amino-acid chain: Cytochrome b (381 aa).

The next 4 helical transmembrane spans lie at 34–54, 78–99, 114–134, and 179–199; these read FGSL…FLAM, WLIR…YLHI, WNTG…GYVL, and FFTF…VHLL. Heme b contacts are provided by His84 and His98. 2 residues coordinate heme b: His183 and His197. His202 contributes to the a ubiquinone binding site. 4 helical membrane-spanning segments follow: residues 227-247, 289-309, 321-341, and 348-368; these read YKDL…TLFS, LGGV…PTLH, LTQI…WIGG, and FIII…LLMP.

Belongs to the cytochrome b family. In terms of assembly, the cytochrome bc1 complex contains 3 respiratory subunits (MT-CYB, CYC1 and UQCRFS1), 2 core proteins (UQCRC1 and UQCRC2) and probably 6 low-molecular weight proteins. It depends on heme b as a cofactor.

Its subcellular location is the mitochondrion inner membrane. Component of the ubiquinol-cytochrome c reductase complex (complex III or cytochrome b-c1 complex) that is part of the mitochondrial respiratory chain. The b-c1 complex mediates electron transfer from ubiquinol to cytochrome c. Contributes to the generation of a proton gradient across the mitochondrial membrane that is then used for ATP synthesis. In Chelonia mydas (Green sea-turtle), this protein is Cytochrome b (MT-CYB).